A 957-amino-acid chain; its full sequence is MSECGGRGGGGGSSSSSDDAEDEGGGGGPAGSGSLSPAPAASSEGRLRRGLRGASLMARRRPELLCGAVALGCALLLALKFTCSRAKDVIIPAKPPVSFFSSRSPVLDLFQGQLDYAEHIRRDSEVVLLFFYAPWCGQSIAARAEIEQAASRLSDQVLFVAINCWWNQGKCRKQKHFFYFPVIYLYHRSFGPIEYKGPMSAVYIEKFVRRVMKPLLYIPSQSELLDFLSNYEPGVLGYFEFSGSPQPPGYLTFFTSALHSLKKDYLGTVRFGVITNKHLAKLVSLVHSGSVYLHRHFNTSLVFPREVINYTAENICKWALENRETLVRWLWPHGGKSLLLNNELKKGPALFVFIPFNPLAESHPLIDEITEVALEYNNCHGDQVVERLLQHLRRVDAPAFKSLAPDPPARLPDPPLITASPCCNTVVLPRWHSISRTHNVCELCVNQTAGGLRPSSVSMPQCSFFEMAAALDSFYLKEQTFYHVVSDSIECSNFLSFYSPFSYYTACCRTINRGVAGFIDSEQGVFETPPVAFSSLEKKCEVESPGSVPHIEENRYLFPELETSSSSFTGLSCRTNKTLNIYLLDSNLFWLYAERLGAPSAARVKEFATIVDVKEESHYILDPKQALMKFTLESFIQNFSVLYSPLKRHLIGSDSTQFTSQRLITEVTTDTFWEVVLQKQDVLLLYYAQWCGFCPALNHVFIQLARLLPSDTFTVARIDVSQNDLPWEFMVDRLPTVLFFPCNRKDLSVKYPEDLPITLPNLLRFILHHSDPASDPRNLAGPPTAECLQNEAVLQQGHIAHLEREIRKLRAEIGTLQRAQVQVEARLASARRDEHRLLRQQHTLERQHDLLRLHSEQLQALYEHKTRELDEVARKLQELADASETLLTENTWLKILVATMEQRLEGRDGADDRVPPSKARSEHPEPPGAPRLPASTPLPANISSTLASEGSPENRTD.

Residues Met1–Ser13 are compositionally biased toward gly residues. Residues Met1–Leu47 form a disordered region. Over residues Ser32–Glu44 the composition is skewed to low complexity. Residues Leu64–Ser84 form a helical membrane-spanning segment. A Thioredoxin 1 domain is found at Ile91–Lys213. 2 disulfides stabilise this stretch: Cys441-Cys444 and Cys691-Cys694. A Thioredoxin 2 domain is found at Leu621–Asp771. A coiled-coil region spans residues Ala785 to Glu889. The segment covering Leu904–Glu925 has biased composition (basic and acidic residues). The tract at residues Leu904–Asp957 is disordered. Polar residues predominate over residues Asn941–Ser951.

The protein belongs to the protein disulfide isomerase family. As to quaternary structure, interacts with the cytoplasmic part of DUOX1 and DUOX2. Interacts with TPO and CYBA.

It localises to the endoplasmic reticulum membrane. Functionally, may act as a redox regulator involved in DUOX proteins folding. The interaction with DUOX1 and DUOX2 suggest that it belongs to a multiprotein complex constituting the thyroid H(2)O(2) generating system. It is however not sufficient to assist DUOX1 and DUOX2 in H(2)O(2) generation. The sequence is that of Thioredoxin domain-containing protein 11 (TXNDC11) from Bos taurus (Bovine).